Reading from the N-terminus, the 239-residue chain is Ribonuclease PH (239 aa).

Phosphate contacts are provided by residues Arg-88 and 126-128 (GTR).

This sequence belongs to the RNase PH family. As to quaternary structure, homohexameric ring arranged as a trimer of dimers.

It carries out the reaction tRNA(n+1) + phosphate = tRNA(n) + a ribonucleoside 5'-diphosphate. Functionally, phosphorolytic 3'-5' exoribonuclease that plays an important role in tRNA 3'-end maturation. Removes nucleotide residues following the 3'-CCA terminus of tRNAs; can also add nucleotides to the ends of RNA molecules by using nucleoside diphosphates as substrates, but this may not be physiologically important. Probably plays a role in initiation of 16S rRNA degradation (leading to ribosome degradation) during starvation. In Coxiella burnetii (strain Dugway 5J108-111), this protein is Ribonuclease PH.